Reading from the N-terminus, the 414-residue chain is Relaxin-3 receptor 2 (414 aa).

Over 1–43 (MATSNSSASLPTLFWVNGSGDSVLSTDGAAMPVQFLVLRIMVA) the chain is Extracellular. 2 N-linked (GlcNAc...) asparagine glycosylation sites follow: Asn5 and Asn17. The chain crosses the membrane as a helical span at residues 44–64 (LAYGLVGIIGLLGNLAVLWVL). The Cytoplasmic segment spans residues 65–77 (GNCGQRVPGLSSD). The chain crosses the membrane as a helical span at residues 78–98 (TFVFSLALADLGLALTLPFWA). Residues 99–116 (TESAMDFHWPFGSALCKV) are Extracellular-facing. A disulfide bridge connects residues Cys114 and Cys191. A helical membrane pass occupies residues 117 to 137 (VLTTTVLSIYASTFLITALSI). Residues 138 to 155 (ARYWVVAMAVGPGSHLSV) are Cytoplasmic-facing. Residues 156–176 (FWARVVTLAVWVAAALVTVPT) traverse the membrane as a helical segment. Residues 177–209 (AIFGAEVELWGVCLCLLRFPSRYWLGAYQLQRV) lie on the Extracellular side of the membrane. Residues 210–230 (VLAFIVPLGVITTSYLLLLAF) form a helical membrane-spanning segment. The Cytoplasmic segment spans residues 231-255 (LERQQRCRPRQWQDSRVVARSVRVL). Residues 256 to 276 (VASFALCWVPNHVVTLWEILV) traverse the membrane as a helical segment. At 277 to 293 (RFDLVPWDSTFYTFHTY) the chain is on the extracellular side. Residues 294 to 316 (ILPITTCLAHSNSCLNPVIYCLL) traverse the membrane as a helical segment. Topologically, residues 317-414 (RREPQQVLVS…SQAAVSPGEV (98 aa)) are cytoplasmic.

The protein belongs to the G-protein coupled receptor 1 family. In terms of tissue distribution, detected only in bone marrow.

The protein localises to the cell membrane. High affinity receptor for INSL5. Also acts as a receptor for RLN3/relaxin-3, as well as bradykinin and kallidin. Binding of the ligand inhibit cAMP accumulation. The sequence is that of Relaxin-3 receptor 2 (Rxfp4) from Mus musculus (Mouse).